The chain runs to 478 residues: Argininosuccinate lyase (478 aa).

Belongs to the lyase 1 family. Argininosuccinate lyase subfamily.

It localises to the cytoplasm. The enzyme catalyses 2-(N(omega)-L-arginino)succinate = fumarate + L-arginine. It functions in the pathway amino-acid biosynthesis; L-arginine biosynthesis; L-arginine from L-ornithine and carbamoyl phosphate: step 3/3. This chain is Argininosuccinate lyase, found in Leptospira biflexa serovar Patoc (strain Patoc 1 / Ames).